A 1669-amino-acid polypeptide reads, in one-letter code: Collagen alpha-1(IV) chain (1669 aa).

A signal peptide spans 1 to 27 (MGPRLGVWLLLLLAALLLHEESSRAAA). Residues 28–172 (KGGCAGSGCG…LGHIPGTLLK (145 aa)) constitute a propeptide, N-terminal propeptide (7S domain). Residues 50 to 1445 (ERGLPGLQGV…PPGTPSVDHG (1396 aa)) are disordered. A triple-helical region region spans residues 173–1440 (GERGYPGQPG…PGSMGPPGTP (1268 aa)). The segment covering 196 to 214 (VGPPGFTGPPGPPGPPGPP) has biased composition (pro residues). 3 positions are modified to 3-hydroxyproline: P204, P207, and P210. 2 stretches are compositionally biased toward basic and acidic residues: residues 254–263 (TAMRGEKGQK) and 289–298 (PGKDGEKGEK). A compositionally biased stretch (gly residues) spans 347 to 356 (GYPGGPGAKG). Residues 357–366 (ETGPKGFPGI) are compositionally biased toward low complexity. Positions 367–376 (PGQPGPPGFP) are enriched in pro residues. The span at 396-412 (PGLPGVSLPGPSGRDGL) shows a compositional bias: low complexity. 2 stretches are compositionally biased toward pro residues: residues 413–424 (PGPPGPPGPPGQ) and 436–448 (PGPP…PGIP). The segment covering 485–494 (PGEIGFPGQP) has biased composition (low complexity). 2 stretches are compositionally biased toward basic and acidic residues: residues 497–508 (KGDRGLPGRDGL) and 535–545 (FDIRLKGDKGD). The segment covering 586-595 (GPPGGVGFPG) has biased composition (gly residues). P587 and P602 each carry 3-hydroxyproline. A 4-hydroxyproline modification is found at P603. Residue P605 is modified to 3-hydroxyproline. A 4-hydroxyproline mark is found at P606, P623, P626, P629, and P632. P647 carries the post-translational modification 3-hydroxyproline. Composition is skewed to gly residues over residues 758–767 (GNVGGPGIPG) and 797–817 (GVPG…GPPG). Residues 847 to 871 (SQGLPGLTGQSGLPGLPGQQGTPGQ) are compositionally biased toward low complexity. The segment covering 937-955 (SMDKVDMGSMKGEKGDQGE) has biased composition (basic and acidic residues). The segment covering 1011–1020 (GSAGGMGLPG) has biased composition (gly residues). Low complexity-rich tracts occupy residues 1030 to 1040 (IPGPQGIPGLP), 1101 to 1114 (SPGS…PGLP), and 1193 to 1212 (FPGL…QGFM). A 3-hydroxyproline modification is found at P1214. Over residues 1247–1258 (PGRPGPMGPPGL) the composition is skewed to pro residues. The segment covering 1290–1299 (GMPGIGGSPG) has biased composition (gly residues). Residues 1413 to 1428 (FGPPGPRGFPGPPGPD) are compositionally biased toward pro residues. P1424 is subject to 3-hydroxyproline. The Collagen IV NC1 domain occupies 1445-1669 (GFLVTRHSQT…SRCQVCMRRT (225 aa)). 6 disulfide bridges follow: C1460–C1551, C1493–C1548, C1505–C1511, C1570–C1665, C1604–C1662, and C1616–C1622. Residue M1533 forms an S-Lysyl-methionine sulfilimine (Met-Lys) (interchain with K-1651) linkage. An S-Lysyl-methionine sulfilimine (Lys-Met) (interchain with M-1533) cross-link involves residue K1651.

It belongs to the type IV collagen family. In terms of assembly, there are six type IV collagen isoforms, alpha 1(IV)-alpha 6(IV), each of which can form a triple helix structure with 2 other chains to generate type IV collagen network. Interacts with EFEMP2. In terms of processing, lysines at the third position of the tripeptide repeating unit (G-X-Y) are hydroxylated in all cases. The modified lysines can be O-glycosylated. Contains 4-hydroxyproline. Prolines at the third position of the tripeptide repeating unit (G-X-Y) are hydroxylated in some or all of the chains. Post-translationally, contains 3-hydroxyproline. This modification occurs on the first proline residue in the sequence motif Gly-Pro-Hyp, where Hyp is 4-hydroxyproline. In terms of processing, type IV collagens contain numerous cysteine residues which are involved in inter- and intramolecular disulfide bonding. 12 of these, located in the NC1 domain, are conserved in all known type IV collagens. The trimeric structure of the NC1 domains is stabilized by covalent bonds (sulfilimine cross-links) between Lys and Met residues. These cross-links are important for the mechanical stability of the basement membrane. Sulfilimine cross-link is catalyzed by PXDN. Post-translationally, proteolytic processing produces the C-terminal NC1 peptide, arresten.

It localises to the secreted. It is found in the extracellular space. The protein localises to the extracellular matrix. The protein resides in the basement membrane. Functionally, type IV collagen is the major structural component of glomerular basement membranes (GBM), forming a 'chicken-wire' meshwork together with laminins, proteoglycans and entactin/nidogen. In terms of biological role, arresten, comprising the C-terminal NC1 domain, inhibits angiogenesis and tumor formation. The C-terminal half is found to possess the anti-angiogenic activity. Specifically inhibits endothelial cell proliferation, migration and tube formation. This chain is Collagen alpha-1(IV) chain, found in Bos taurus (Bovine).